Consider the following 108-residue polypeptide: UPF0060 membrane protein Mflv_3127 (108 aa).

4 helical membrane-spanning segments follow: residues 7-27 (LLFV…WQGF), 32-52 (GWLW…VAAF), 61-81 (VLAA…MVAD), and 87-107 (RWDI…MYAP).

It belongs to the UPF0060 family.

It is found in the cell membrane. The chain is UPF0060 membrane protein Mflv_3127 from Mycolicibacterium gilvum (strain PYR-GCK) (Mycobacterium gilvum (strain PYR-GCK)).